The following is a 335-amino-acid chain: Glycerol-3-phosphate dehydrogenase [NAD(P)+] (335 aa).

NADPH-binding residues include Trp15, Arg36, and Lys109. 3 residues coordinate sn-glycerol 3-phosphate: Lys109, Gly137, and Ser139. Ala141 is a binding site for NADPH. Sn-glycerol 3-phosphate is bound by residues Lys192, Asp245, Ser255, Arg256, and Asn257. Lys192 (proton acceptor) is an active-site residue. Arg256 is an NADPH binding site. NADPH contacts are provided by Leu279 and Glu281.

It belongs to the NAD-dependent glycerol-3-phosphate dehydrogenase family.

It is found in the cytoplasm. It catalyses the reaction sn-glycerol 3-phosphate + NAD(+) = dihydroxyacetone phosphate + NADH + H(+). The catalysed reaction is sn-glycerol 3-phosphate + NADP(+) = dihydroxyacetone phosphate + NADPH + H(+). Its pathway is membrane lipid metabolism; glycerophospholipid metabolism. Functionally, catalyzes the reduction of the glycolytic intermediate dihydroxyacetone phosphate (DHAP) to sn-glycerol 3-phosphate (G3P), the key precursor for phospholipid synthesis. This chain is Glycerol-3-phosphate dehydrogenase [NAD(P)+], found in Beijerinckia indica subsp. indica (strain ATCC 9039 / DSM 1715 / NCIMB 8712).